We begin with the raw amino-acid sequence, 176 residues long: Ribosome maturation factor RimM (176 aa).

A PRC barrel domain is found at 97-176; that stretch reads GDEFYWRELV…TIQVDWDPSF (80 aa).

The protein belongs to the RimM family. Binds ribosomal protein uS19.

It is found in the cytoplasm. An accessory protein needed during the final step in the assembly of 30S ribosomal subunit, possibly for assembly of the head region. Essential for efficient processing of 16S rRNA. May be needed both before and after RbfA during the maturation of 16S rRNA. It has affinity for free ribosomal 30S subunits but not for 70S ribosomes. In Pseudoalteromonas atlantica (strain T6c / ATCC BAA-1087), this protein is Ribosome maturation factor RimM.